The chain runs to 228 residues: Potassium/proton antiporter CemA (228 aa).

3 consecutive transmembrane segments (helical) span residues Phe-6–Phe-26, Ile-113–Leu-133, and Ile-188–Ile-208.

It belongs to the CemA family.

The protein localises to the plastid. It is found in the chloroplast inner membrane. It catalyses the reaction K(+)(in) + H(+)(out) = K(+)(out) + H(+)(in). Functionally, contributes to K(+)/H(+) antiport activity by supporting proton efflux to control proton extrusion and homeostasis in chloroplasts in a light-dependent manner to modulate photosynthesis. Prevents excessive induction of non-photochemical quenching (NPQ) under continuous-light conditions. Indirectly promotes efficient inorganic carbon uptake into chloroplasts. The sequence is that of Potassium/proton antiporter CemA from Populus alba (White poplar).